Reading from the N-terminus, the 82-residue chain is Delta-actitoxin-Aeq2b 2 (82 aa).

The first 19 residues, 1-19, serve as a signal peptide directing secretion; sequence MNRLMILVFAAVFLALASA. The propeptide occupies 20-26; that stretch reads DEDVDIA. Disulfide bonds link C32–C79, C34–C69, and C62–C80.

This sequence belongs to the sea anemone sodium channel inhibitory toxin family. Type I subfamily.

It is found in the secreted. Its subcellular location is the nematocyst. Functionally, binds specifically to voltage-gated sodium channels (Nav), thereby delaying their inactivation during signal transduction. Causes death to crabs. In Actinia equina (Beadlet anemone), this protein is Delta-actitoxin-Aeq2b 2.